Consider the following 329-residue polypeptide: Minor capsid protein A1 (329 aa).

Residues 143–162 (GPSPVPGPNPDPPLEPPPGT) form a disordered region. The segment covering 145-161 (SPVPGPNPDPPLEPPPG) has biased composition (pro residues).

The protein localises to the virion. Functionally, minor capsid protein. This Qbeta virus (strain MX1) protein is Minor capsid protein A1.